The primary structure comprises 35 residues: Defensin-B (35 aa).

3 disulfides stabilise this stretch: Cys4–Cys25, Cys10–Cys33, and Cys14–Cys35.

The protein localises to the secreted. Its function is as follows. Has antibacterial activity against M.luteus and E.coli. The polypeptide is Defensin-B (Mytilus edulis (Blue mussel)).